Consider the following 475-residue polypeptide: Ribulose bisphosphate carboxylase large chain (475 aa).

Residues Asn-123 and Thr-173 each coordinate substrate. Residue Lys-175 is the Proton acceptor of the active site. Lys-177 is a substrate binding site. Mg(2+) is bound by residues Lys-201, Asp-203, and Glu-204. Lys-201 carries the N6-carboxylysine modification. His-294 (proton acceptor) is an active-site residue. Residues Arg-295, His-327, and Ser-379 each coordinate substrate.

The protein belongs to the RuBisCO large chain family. Type I subfamily. In terms of assembly, heterohexadecamer of 8 large chains and 8 small chains. Mg(2+) serves as cofactor.

Its subcellular location is the plastid. It is found in the cyanelle. It carries out the reaction 2 (2R)-3-phosphoglycerate + 2 H(+) = D-ribulose 1,5-bisphosphate + CO2 + H2O. The enzyme catalyses D-ribulose 1,5-bisphosphate + O2 = 2-phosphoglycolate + (2R)-3-phosphoglycerate + 2 H(+). In terms of biological role, ruBisCO catalyzes two reactions: the carboxylation of D-ribulose 1,5-bisphosphate, the primary event in carbon dioxide fixation, as well as the oxidative fragmentation of the pentose substrate in the photorespiration process. Both reactions occur simultaneously and in competition at the same active site. The polypeptide is Ribulose bisphosphate carboxylase large chain (Cyanophora paradoxa).